We begin with the raw amino-acid sequence, 245 residues long: Probable transcriptional regulatory protein Ddes_0536 (245 aa).

The segment at 1 to 21 (MAGHSKWANIQHRKGRQDAKR) is disordered.

Belongs to the TACO1 family.

It is found in the cytoplasm. This is Probable transcriptional regulatory protein Ddes_0536 from Desulfovibrio desulfuricans (strain ATCC 27774 / DSM 6949 / MB).